Here is a 391-residue protein sequence, read N- to C-terminus: Steroid 3-ketoacyl-CoA thiolase (391 aa).

Cys-93 (acyl-thioester intermediate) is an active-site residue. Residues Gln-151, Arg-221–Thr-223, and Ser-246 contribute to the CoA site. Residues His-347 and Cys-377 each act as proton acceptor in the active site. Gly-379 is a binding site for substrate.

It belongs to the thiolase-like superfamily. Thiolase family. Dimer of dimers.

It catalyses the reaction an acyl-CoA + acetyl-CoA = a 3-oxoacyl-CoA + CoA. It carries out the reaction 3-oxochol-4-en-22-oyl-CoA + acetyl-CoA = 3,22-dioxochol-4-en-24-oyl-CoA + CoA. Its pathway is steroid metabolism; cholesterol degradation. Its function is as follows. Involved in the beta-oxidation of the cholesterol side chain. It is important for utilization of cholesterol as a sole carbon source in vitro and for full virulence in the chronic stage of mouse lung infection. Catalyzes the thiolysis of 3,22-dioxochol-4-en-24-oyl-CoA to yield 3-oxo-4-pregnene-20-carboxyl-CoA (3-OPC-CoA) and acetyl-CoA. Also able to use acetoacetyl-CoA (AcAcCoA) as substrate. This chain is Steroid 3-ketoacyl-CoA thiolase (fadA5), found in Mycobacterium tuberculosis (strain ATCC 25618 / H37Rv).